Reading from the N-terminus, the 688-residue chain is DNA topoisomerase 1 (688 aa).

One can recognise a Toprim domain in the interval 3 to 113 (ENLVIVESPA…TENRVVFNEI (111 aa)). Residues Glu9 and Asp82 each contribute to the Mg(2+) site. The region spanning 129–556 (EMELVDAQQA…FYSSFKQDVE (428 aa)) is the Topo IA-type catalytic domain. The tract at residues 163–168 (SAGRVQ) is interaction with DNA. Catalysis depends on Tyr298, which acts as the O-(5'-phospho-DNA)-tyrosine intermediate. The segment at 322–349 (YGNDYTSNRKSKGQGDQDAHEAIRPSST) is disordered. Residues 334–344 (GQGDQDAHEAI) show a composition bias toward basic and acidic residues. 3 C4-type zinc fingers span residues 576–602 (CEVCGSPMVIKMGRYGKFMACSNFPDC), 616–644 (CPKCKEGDVVERKSKKNRIFYGCSKYPEC), and 657–680 (CPKCEHYLVEKKQGRKSQVVCSNC).

This sequence belongs to the type IA topoisomerase family. In terms of assembly, monomer. Requires Mg(2+) as cofactor.

The catalysed reaction is ATP-independent breakage of single-stranded DNA, followed by passage and rejoining.. In terms of biological role, releases the supercoiling and torsional tension of DNA, which is introduced during the DNA replication and transcription, by transiently cleaving and rejoining one strand of the DNA duplex. Introduces a single-strand break via transesterification at a target site in duplex DNA. The scissile phosphodiester is attacked by the catalytic tyrosine of the enzyme, resulting in the formation of a DNA-(5'-phosphotyrosyl)-enzyme intermediate and the expulsion of a 3'-OH DNA strand. The free DNA strand then undergoes passage around the unbroken strand, thus removing DNA supercoils. Finally, in the religation step, the DNA 3'-OH attacks the covalent intermediate to expel the active-site tyrosine and restore the DNA phosphodiester backbone. This chain is DNA topoisomerase 1, found in Staphylococcus saprophyticus subsp. saprophyticus (strain ATCC 15305 / DSM 20229 / NCIMB 8711 / NCTC 7292 / S-41).